Consider the following 434-residue polypeptide: tRNA dimethylallyltransferase (434 aa).

An ATP-binding site is contributed by 10–17 (GTTGAGKS). 12-17 (TGAGKS) serves as a coordination point for substrate. Interaction with substrate tRNA regions lie at residues 35–38 (DSMQ) and 166–170 (RKIRR). Residues 211 to 233 (SLVLMPRLDKRVDKMLSHGLVDE) form an interaction with isopentenylpyrophosphate transferase region. Interaction with substrate tRNA regions lie at residues 256 to 258 (QCI), 281 to 299 (RMKV…WIQS), and 291 to 298 (KSQKKWIQ). The Matrin-type zinc-finger motif lies at 380-416 (FVCEECLDKRGDPFTVIGEDAFNVHIKSRKHKTTVRR).

Belongs to the IPP transferase family.

Its subcellular location is the mitochondrion. The protein resides in the cytoplasm. It localises to the nucleus. The enzyme catalyses adenosine(37) in tRNA + dimethylallyl diphosphate = N(6)-dimethylallyladenosine(37) in tRNA + diphosphate. In terms of biological role, catalyzes the transfer of a dimethylallyl group onto the adenine at position 37 of both cytosolic and mitochondrial tRNAs, leading to the formation of N6-(dimethylallyl)adenosine (i(6)A). This Schizosaccharomyces pombe (strain 972 / ATCC 24843) (Fission yeast) protein is tRNA dimethylallyltransferase (tit1).